A 495-amino-acid chain; its full sequence is Trimethylamine methyltransferase MttB1 (495 aa).

Position 334 (pyrrolysine 334) is a non-standard amino acid, pyrrolysine.

It belongs to the trimethylamine methyltransferase family. In terms of assembly, can form a complex with MttC.

It catalyses the reaction Co(I)-[trimethylamine-specific corrinoid protein] + trimethylamine + H(+) = methyl-Co(III)-[trimethylamine-specific corrinoid protein] + dimethylamine. The protein operates within one-carbon metabolism; methanogenesis from trimethylamine. In terms of biological role, catalyzes the transfer of a methyl group from trimethylamine to the corrinoid cofactor of MttC. This is Trimethylamine methyltransferase MttB1 (mttB1) from Methanosarcina acetivorans (strain ATCC 35395 / DSM 2834 / JCM 12185 / C2A).